The primary structure comprises 850 residues: Transcription initiation factor TFIID subunit 4B (850 aa).

Positions G99 to A240 are sufficient for interaction with ZNF628. Residues E256 to I353 form the TAFH domain. A required for interaction with P65/RELA region spans residues P504–Q526. The Nuclear export signal motif lies at P509 to N549. Residue S584 is modified to Phosphoserine. Residues P642–I691 enclose the Histone-fold domain. The interval K788–A812 is disordered. The span at G794–A812 shows a compositional bias: polar residues. The interval P818–K850 is required for interaction with TAF12.

Belongs to the TAF4 family. As to quaternary structure, TFIID is composed of TATA binding protein (TBP) and a number of TBP-associated factors (TAFs). Heterodimerizes with TAF12/TFII20 via the C-terminal H2A-like histone-fold domain. This heterodimer forms a histone-like octamer with the TAF6/TAFII70-TAF9/TAFII31 heterodimer. Interacts with P65/RELA homodimers and P65/RELA-REL heterodimers. Interaction with POU2AF1, via its C-terminal activation domain, is required for octamer-dependent transcription. Interacts with ZNF628. In terms of tissue distribution, highly expressed in the testes and ovary, whereas lower levels are detected in most other tissues.

Its subcellular location is the nucleus. It is found in the cytoplasm. Functionally, cell type-specific subunit of the general transcription factor TFIID that may function as a gene-selective coactivator in certain cells. TFIID is a multimeric protein complex that plays a central role in mediating promoter responses to various activators asond repressors. TAF4B is a transcriptional coactivator of the p65/RELA NF-kappa-B subunit. Involved in the activation of a subset of antiapoptotic genes including TNFAIP3. Through interaction with OCBA/POU2AF1, acts as a coactivator of B-cell-specific transcription. Plays a role in spermiogenesis and oogenesis. In Mus musculus (Mouse), this protein is Transcription initiation factor TFIID subunit 4B (Taf4b).